The chain runs to 138 residues: Protein NrdI (138 aa).

The protein belongs to the NrdI family.

In terms of biological role, probably involved in ribonucleotide reductase function. This Mycobacterium leprae (strain TN) protein is Protein NrdI.